We begin with the raw amino-acid sequence, 645 residues long: Threonine--tRNA ligase (645 aa).

Residues 1–63 (MDQIKIKFPD…ESDGDIEIVT (63 aa)) enclose the TGS domain. Residues 242 to 540 (DHRKIGKELE…LTEETKGAFP (299 aa)) form a catalytic region. Zn(2+) is bound by residues C336, H387, and H517.

Belongs to the class-II aminoacyl-tRNA synthetase family. As to quaternary structure, homodimer. Zn(2+) is required as a cofactor.

Its subcellular location is the cytoplasm. The catalysed reaction is tRNA(Thr) + L-threonine + ATP = L-threonyl-tRNA(Thr) + AMP + diphosphate + H(+). In terms of biological role, catalyzes the attachment of threonine to tRNA(Thr) in a two-step reaction: L-threonine is first activated by ATP to form Thr-AMP and then transferred to the acceptor end of tRNA(Thr). Also edits incorrectly charged L-seryl-tRNA(Thr). In Staphylococcus saprophyticus subsp. saprophyticus (strain ATCC 15305 / DSM 20229 / NCIMB 8711 / NCTC 7292 / S-41), this protein is Threonine--tRNA ligase.